We begin with the raw amino-acid sequence, 220 residues long: Vesicle-associated membrane protein 7 (220 aa).

An N-acetylalanine modification is found at Ala-2. Over 2–188 (AILFAVVARG…ARAMCMKNIK (187 aa)) the chain is Cytoplasmic. In terms of domain architecture, Longin spans 7-110 (VVARGTTILA…AMNSEFSSVL (104 aa)). The 61-residue stretch at 125 to 185 (KVMETQAQVD…RNLARAMCMK (61 aa)) folds into the v-SNARE coiled-coil homology domain. Residues Ser-167 and Ser-168 each carry the phosphoserine modification. Residues 189–209 (LTIIIIIVSIVFIYIIVSLLC) form a helical; Anchor for type IV membrane protein membrane-spanning segment. Topologically, residues 210-220 (GGFTWPNCVKK) are vesicular.

The protein belongs to the synaptobrevin family. As to quaternary structure, component of the SNARE complex composed of STX4, SNAP23 and VAMP7 that binds SYT7 during lysosomal exocytosis. Component of the SNARE complex composed of STX7, STX8, VAMP7 and VTI1B that is required for heterotypic fusion of late endosomes with lysosomes. May interact with STX17. Interacts with PICALM. Interacts with RAB21.

The protein localises to the cytoplasmic vesicle. It localises to the secretory vesicle membrane. Its subcellular location is the golgi apparatus. The protein resides in the trans-Golgi network membrane. It is found in the late endosome membrane. The protein localises to the lysosome membrane. It localises to the endoplasmic reticulum membrane. Its subcellular location is the phagosome membrane. The protein resides in the synapse. It is found in the synaptosome. In terms of biological role, involved in the targeting and/or fusion of transport vesicles to their target membrane during transport of proteins from the early endosome to the lysosome. Required for heterotypic fusion of late endosomes with lysosomes and homotypic lysosomal fusion. Required for calcium regulated lysosomal exocytosis. Involved in the export of chylomicrons from the endoplasmic reticulum to the cis Golgi. Required for exocytosis of mediators during eosinophil and neutrophil degranulation, and target cell killing by natural killer cells. Required for focal exocytosis of late endocytic vesicles during phagosome formation. The protein is Vesicle-associated membrane protein 7 (Vamp7) of Mus musculus (Mouse).